A 464-amino-acid chain; its full sequence is MPFIPHTEEDVSAMLGAIGAASIEDLFDEIPPALKTGKLKDVPDGLPEMAVARLMQERASQDGFWSNFIGAGVYEHHIPAAIWQITTRGEFYSAYTPYQAEASQGTLQLIYEYQTMMTRLTGLDVSNASLYDGASALAEAVLMAVRSHKSSRRVLVPKTVHPVYRSVVVTTVRNQGIDLVELEYDPATGKTVLPSEPGAFAGLVIPQPNFFGVLEDVHTMTDWTHANGGLAIALVNPTTLAVLEAPGKWGTKGADIAVGEGQPLGAPMASGGPYFGFMCCRQDFVRQMPGRIVGRTVDLDGKPGFALTLQAREQHIRRSKATSNICTNQGLVVTAATQYMALLGPQGLAKVAAASHANTVALAEKLGAIPGVARAFASPCFHEVVLKLDDGTLKGTSAKDVLRALRAQGILGGLDISGWYPELGQAILVCVTETKTGADLDHYAQHLERILSKRREAPPCAYKN.

The protein belongs to the GcvP family. N-terminal subunit subfamily. In terms of assembly, the glycine cleavage system is composed of four proteins: P, T, L and H. In this organism, the P 'protein' is a heterodimer of two subunits.

It catalyses the reaction N(6)-[(R)-lipoyl]-L-lysyl-[glycine-cleavage complex H protein] + glycine + H(+) = N(6)-[(R)-S(8)-aminomethyldihydrolipoyl]-L-lysyl-[glycine-cleavage complex H protein] + CO2. Its function is as follows. The glycine cleavage system catalyzes the degradation of glycine. The P protein binds the alpha-amino group of glycine through its pyridoxal phosphate cofactor; CO(2) is released and the remaining methylamine moiety is then transferred to the lipoamide cofactor of the H protein. This Thiobacillus denitrificans (strain ATCC 25259 / T1) protein is Probable glycine dehydrogenase (decarboxylating) subunit 1.